We begin with the raw amino-acid sequence, 189 residues long: GTPase NRas (189 aa).

Residues 10–18 (GAGGVGKSA) and 29–30 (VD) contribute to the GTP site. The Effector region motif lies at 32–40 (YDPTIEDSY). T35 is a glycosylation site ((Microbial infection) O-linked (Glc) threonine; by P.sordellii toxin TcsL). Position 57–61 (57–61 (DTAGQ)) interacts with GTP. Phosphoserine is present on S89. 116–119 (NKCD) is a GTP binding site. A hypervariable region region spans residues 166–185 (YRMKKLNSSDDGTQGCMGLP). A Glycyl lysine isopeptide (Lys-Gly) (interchain with G-Cter in ubiquitin) cross-link involves residue K170. The S-palmitoyl cysteine moiety is linked to residue C181. C186 carries the S-farnesyl cysteine lipid modification. A propeptide spans 187–189 (VVM) (removed in mature form).

It belongs to the small GTPase superfamily. Ras family. In terms of assembly, interacts (active GTP-bound form preferentially) with RGS14. Interacts (active GTP-bound form) with RASSF7. Interacts (active GTP-bound form) with both SHOC2 and PP1c (all isoforms) to form a tertiary complex; SHOC2 and PP1c preferably bind M-Ras/MRAS, but they also bind K-Ras/KRAS, N-Ras/NRAS and H-Ras/HRAS. In terms of processing, palmitoylated by the ZDHHC9-GOLGA7 complex. Depalmitoylated by ABHD17A, ABHD17B and ABHD17C. A continuous cycle of de- and re-palmitoylation regulates rapid exchange between plasma membrane and Golgi. Post-translationally, acetylation at Lys-104 prevents interaction with guanine nucleotide exchange factors (GEFs). Fatty-acylated at Lys-169 and/or Lys-170. In terms of processing, ubiquitinated by the BCR(LZTR1) E3 ubiquitin ligase complex at Lys-170 in a non-degradative manner, leading to inhibit Ras signaling by decreasing Ras association with membranes. Post-translationally, phosphorylation at Ser-89 enhances NRAS association with its downstream effectors. (Microbial infection) Glucosylated at Thr-35 by P.sordellii toxin TcsL.

It localises to the cell membrane. The protein resides in the golgi apparatus membrane. It carries out the reaction GTP + H2O = GDP + phosphate + H(+). With respect to regulation, alternates between an inactive form bound to GDP and an active form bound to GTP. Activated by a guanine nucleotide-exchange factor (GEF) and inactivated by a GTPase-activating protein (GAP). Ras proteins bind GDP/GTP and possess intrinsic GTPase activity. This is GTPase NRas (NRAS) from Homo sapiens (Human).